The chain runs to 322 residues: Elongation factor Ts, mitochondrial (322 aa).

This sequence belongs to the EF-Ts family.

It is found in the mitochondrion. Associates with the EF-Tu.GDP complex and induces the exchange of GDP to GTP. It remains bound to the aminoacyl-tRNA.EF-Tu.GTP complex up to the GTP hydrolysis stage on the ribosome. In Chlamydomonas reinhardtii (Chlamydomonas smithii), this protein is Elongation factor Ts, mitochondrial.